Reading from the N-terminus, the 377-residue chain is Cobalt-precorrin-5B C(1)-methyltransferase (377 aa).

The interval 1–21 is disordered; sequence MNPVRQPYDLAAPAPNGMRRG.

This sequence belongs to the CbiD family.

The enzyme catalyses Co-precorrin-5B + S-adenosyl-L-methionine = Co-precorrin-6A + S-adenosyl-L-homocysteine. The protein operates within cofactor biosynthesis; adenosylcobalamin biosynthesis; cob(II)yrinate a,c-diamide from sirohydrochlorin (anaerobic route): step 6/10. Its function is as follows. Catalyzes the methylation of C-1 in cobalt-precorrin-5B to form cobalt-precorrin-6A. The sequence is that of Cobalt-precorrin-5B C(1)-methyltransferase from Chromobacterium violaceum (strain ATCC 12472 / DSM 30191 / JCM 1249 / CCUG 213 / NBRC 12614 / NCIMB 9131 / NCTC 9757 / MK).